Here is a 430-residue protein sequence, read N- to C-terminus: Phosphomethylpyrimidine synthase (430 aa).

Residues asparagine 67, methionine 96, tyrosine 125, histidine 161, 183–185 (SRG), 224–227 (DALR), and glutamate 263 contribute to the substrate site. Histidine 267 is a binding site for Zn(2+). Tyrosine 290 provides a ligand contact to substrate. Position 331 (histidine 331) interacts with Zn(2+). Residues cysteine 406, cysteine 409, and cysteine 413 each contribute to the [4Fe-4S] cluster site.

The protein belongs to the ThiC family. As to quaternary structure, homodimer. The cofactor is [4Fe-4S] cluster.

The enzyme catalyses 5-amino-1-(5-phospho-beta-D-ribosyl)imidazole + S-adenosyl-L-methionine = 4-amino-2-methyl-5-(phosphooxymethyl)pyrimidine + CO + 5'-deoxyadenosine + formate + L-methionine + 3 H(+). It functions in the pathway cofactor biosynthesis; thiamine diphosphate biosynthesis. In terms of biological role, catalyzes the synthesis of the hydroxymethylpyrimidine phosphate (HMP-P) moiety of thiamine from aminoimidazole ribotide (AIR) in a radical S-adenosyl-L-methionine (SAM)-dependent reaction. The protein is Phosphomethylpyrimidine synthase of Campylobacter jejuni subsp. jejuni serotype O:23/36 (strain 81-176).